The sequence spans 384 residues: 4-hydroxy-3-methylbut-2-en-1-yl diphosphate synthase (flavodoxin) (384 aa).

[4Fe-4S] cluster-binding residues include Cys-280, Cys-283, Cys-315, and Glu-322.

Belongs to the IspG family. It depends on [4Fe-4S] cluster as a cofactor.

It catalyses the reaction (2E)-4-hydroxy-3-methylbut-2-enyl diphosphate + oxidized [flavodoxin] + H2O + 2 H(+) = 2-C-methyl-D-erythritol 2,4-cyclic diphosphate + reduced [flavodoxin]. The protein operates within isoprenoid biosynthesis; isopentenyl diphosphate biosynthesis via DXP pathway; isopentenyl diphosphate from 1-deoxy-D-xylulose 5-phosphate: step 5/6. Its function is as follows. Converts 2C-methyl-D-erythritol 2,4-cyclodiphosphate (ME-2,4cPP) into 1-hydroxy-2-methyl-2-(E)-butenyl 4-diphosphate. This is 4-hydroxy-3-methylbut-2-en-1-yl diphosphate synthase (flavodoxin) from Frankia alni (strain DSM 45986 / CECT 9034 / ACN14a).